An 894-amino-acid chain; its full sequence is Alpha-actinin-2 (894 aa).

The actin-binding stretch occupies residues 1–254 (MNQIEPGVQY…IMTYVSCFYH (254 aa)). Calponin-homology (CH) domains follow at residues 38–142 (KQQR…LRFA) and 151–257 (TSAK…HAFA). Residue Thr-237 is modified to Phosphothreonine. Spectrin repeat units follow at residues 281–391 (RLME…WLLN), 401–506 (HLAE…ALER), 516–627 (QLHL…SLQE), and 637–740 (RLRR…EVET). EF-hand domains follow at residues 753–788 (EQMN…MGYD) and 789–824 (LGEA…ETAD). Ca(2+)-binding residues include Asp-766, Asn-770, Asp-777, Asp-802, Asn-804, and Thr-808.

This sequence belongs to the alpha-actinin family. Homodimer; antiparallel. Also forms heterodimers with ACTN3. Interacts with ADAM12, MYOZ1, MYOZ2 and MYOZ3. Interacts via its C-terminal region with the LDB3 PDZ domain. Interacts with XIRP2. Interacts with DST (via N-terminus). Interacts with PARVB. Interacts with SYNPO2. In terms of processing, ubiquitinated by FBXL22, leading to proteasomal degradation.

The protein localises to the cytoplasm. It localises to the myofibril. The protein resides in the sarcomere. Its subcellular location is the z line. F-actin cross-linking protein which is thought to anchor actin to a variety of intracellular structures. This is a bundling protein. In Bos taurus (Bovine), this protein is Alpha-actinin-2 (ACTN2).